A 487-amino-acid polypeptide reads, in one-letter code: N-succinylglutamate 5-semialdehyde dehydrogenase (487 aa).

Glycine 221–glycine 226 is an NAD(+) binding site. Residues glutamate 244 and cysteine 278 contribute to the active site.

This sequence belongs to the aldehyde dehydrogenase family. AstD subfamily.

The enzyme catalyses N-succinyl-L-glutamate 5-semialdehyde + NAD(+) + H2O = N-succinyl-L-glutamate + NADH + 2 H(+). Its pathway is amino-acid degradation; L-arginine degradation via AST pathway; L-glutamate and succinate from L-arginine: step 4/5. Catalyzes the NAD-dependent reduction of succinylglutamate semialdehyde into succinylglutamate. The polypeptide is N-succinylglutamate 5-semialdehyde dehydrogenase (Burkholderia ambifaria (strain ATCC BAA-244 / DSM 16087 / CCUG 44356 / LMG 19182 / AMMD) (Burkholderia cepacia (strain AMMD))).